The sequence spans 417 residues: Tyrosine--tRNA ligase (417 aa).

Position 39 (Tyr39) interacts with L-tyrosine. Residues 44–53 carry the 'HIGH' region motif; sequence PTAASLHAGG. Residues Tyr176 and Gln180 each coordinate L-tyrosine. The 'KMSKS' region signature appears at 236–240; it reads KMGKS. Lys239 lines the ATP pocket. The S4 RNA-binding domain maps to 350–417; the sequence is LGLLTLLVRA…KKKHLLVRPV (68 aa).

The protein belongs to the class-I aminoacyl-tRNA synthetase family. TyrS type 1 subfamily. Homodimer.

It localises to the cytoplasm. The catalysed reaction is tRNA(Tyr) + L-tyrosine + ATP = L-tyrosyl-tRNA(Tyr) + AMP + diphosphate + H(+). In terms of biological role, catalyzes the attachment of tyrosine to tRNA(Tyr) in a two-step reaction: tyrosine is first activated by ATP to form Tyr-AMP and then transferred to the acceptor end of tRNA(Tyr). In Rhizobium meliloti (strain 1021) (Ensifer meliloti), this protein is Tyrosine--tRNA ligase.